The primary structure comprises 321 residues: Probable UDP-sugar transporter protein SLC35A4 (321 aa).

The Cytoplasmic portion of the chain corresponds to 1 to 22; that stretch reads MYSVNIEPDGSNHSPSRKRLKQ. Residues 23-43 form a helical membrane-spanning segment; the sequence is ILWGLMLVLSVTIYGSHAPLI. Topologically, residues 44-56 are lumenal; the sequence is YLCKVNGEIPFSS. Residues 57-77 form a helical membrane-spanning segment; that stretch reads SAVVLLIELSKFVISLVFFLI. The Cytoplasmic portion of the chain corresponds to 78 to 91; that stretch reads QDWKSLKASVSWHL. The chain crosses the membrane as a helical span at residues 92 to 112; the sequence is AAPYAVPAVLYGANNNLVVYI. Residues 113 to 119 lie on the Lumenal side of the membrane; the sequence is QHFMDPS. A helical membrane pass occupies residues 120-140; it reads SFQVLSNLKIVSTAVLYSLFL. Residues 141–149 are Cytoplasmic-facing; the sequence is RQRLSVRRW. The chain crosses the membrane as a helical span at residues 150-170; sequence LSVFLLLAAGVFYSYGGIQDL. Residues 171-180 lie on the Lumenal side of the membrane; sequence EKVSSDTNLY. A helical transmembrane segment spans residues 181–201; the sequence is VTLPGLLLMLAYCLISGLSAV. The Cytoplasmic portion of the chain corresponds to 202–211; it reads YTEMTLKTQK. A helical transmembrane segment spans residues 212–232; the sequence is IPLNMQNLYLYSFGIIINLTA. Over 233–247 the chain is Lumenal; the sequence is HLTSSKNSDFFDGFS. A helical membrane pass occupies residues 248–268; sequence VWVWVIILSQALNGLIMSLVM. The Cytoplasmic segment spans residues 269–321; it reads KLSNNITRLFIISFSMLANGFLSFILFQLQLTALFFLAVVLIGLAVYMYYGMK.

This sequence belongs to the nucleotide-sugar transporter family. SLC35A subfamily.

Its subcellular location is the golgi apparatus membrane. The enzyme catalyses CDP-L-ribitol(in) + CDP(out) = CDP-L-ribitol(out) + CDP(in). In terms of biological role, mediates the transport of CDP-ribitol. Does not exhibit CMP-sialic acid, UDP-galactose and UDP-N-acetylglucosamine transport activity. The sequence is that of Probable UDP-sugar transporter protein SLC35A4 from Xenopus tropicalis (Western clawed frog).